The primary structure comprises 173 residues: MANPKNTADLAALKEKLEGANSIVLTEYRGLTVGQLQELRNNLGFDVEYSVAKNTLFKIAANEAGIEGLDEHLTGPTAIAFIKGEAVDAAKVITKFADDNKALVIKGGYMDGNALSADQVEAIAKLDNRETTLAKLAGAMKGSMAKAAAVFNAPATKMVRTAAALQDKKAAEA.

It belongs to the universal ribosomal protein uL10 family. Part of the ribosomal stalk of the 50S ribosomal subunit. The N-terminus interacts with L11 and the large rRNA to form the base of the stalk. The C-terminus forms an elongated spine to which L12 dimers bind in a sequential fashion forming a multimeric L10(L12)X complex.

In terms of biological role, forms part of the ribosomal stalk, playing a central role in the interaction of the ribosome with GTP-bound translation factors. The polypeptide is Large ribosomal subunit protein uL10 (Corynebacterium aurimucosum (strain ATCC 700975 / DSM 44827 / CIP 107346 / CN-1) (Corynebacterium nigricans)).